A 205-amino-acid polypeptide reads, in one-letter code: Small ribosomal subunit protein uS4 (205 aa).

The tract at residues 18-46 (NIWGRPKSPVNRREYGPGQHGQRRKGKLS) is disordered. The 64-residue stretch at 94–157 (RRLDTVVYRS…KQLAIVLEAN (64 aa)) folds into the S4 RNA-binding domain.

Belongs to the universal ribosomal protein uS4 family. As to quaternary structure, part of the 30S ribosomal subunit. Contacts protein S5. The interaction surface between S4 and S5 is involved in control of translational fidelity.

One of the primary rRNA binding proteins, it binds directly to 16S rRNA where it nucleates assembly of the body of the 30S subunit. Its function is as follows. With S5 and S12 plays an important role in translational accuracy. The sequence is that of Small ribosomal subunit protein uS4 from Rhodopseudomonas palustris (strain BisB5).